The sequence spans 315 residues: Deoxyribonuclease-1-like 1 (315 aa).

The N-terminal stretch at 1–29 is a signal peptide; it reads MDSSGGFQKHTCGHALLLLLLLLAGGAEA. Catalysis depends on residues Glu-108 and His-159. An intrachain disulfide couples Cys-198 to Cys-235. A glycan (N-linked (GlcNAc...) asparagine) is linked at Asn-272.

Belongs to the DNase I family.

It localises to the endoplasmic reticulum. The chain is Deoxyribonuclease-1-like 1 (DNASE1L1) from Sus scrofa (Pig).